A 127-amino-acid polypeptide reads, in one-letter code: Aspartate 1-decarboxylase (127 aa).

Catalysis depends on serine 25, which acts as the Schiff-base intermediate with substrate; via pyruvic acid. A Pyruvic acid (Ser) modification is found at serine 25. Threonine 57 provides a ligand contact to substrate. The active-site Proton donor is the tyrosine 58. Substrate is bound at residue 73-75; that stretch reads GAA.

This sequence belongs to the PanD family. In terms of assembly, heterooctamer of four alpha and four beta subunits. Pyruvate serves as cofactor. In terms of processing, is synthesized initially as an inactive proenzyme, which is activated by self-cleavage at a specific serine bond to produce a beta-subunit with a hydroxyl group at its C-terminus and an alpha-subunit with a pyruvoyl group at its N-terminus.

The protein localises to the cytoplasm. It catalyses the reaction L-aspartate + H(+) = beta-alanine + CO2. The protein operates within cofactor biosynthesis; (R)-pantothenate biosynthesis; beta-alanine from L-aspartate: step 1/1. Catalyzes the pyruvoyl-dependent decarboxylation of aspartate to produce beta-alanine. This Geobacillus sp. (strain WCH70) protein is Aspartate 1-decarboxylase.